The chain runs to 1048 residues: Malignant fibrous histiocytoma-amplified sequence 1 homolog (1048 aa).

N-acetylalanine is present on Ala2. LRR repeat units lie at residues 60–81, 84–105, 108–129, 132–153, 155–176, 178–199, 201–222, 224–246, 247–268, 270–292, 293–314, 316–337, and 339–360; these read DIEVLNLGNNGLEDVPEGLGSA, SLRVLVLRRNRFARLPPAVAEL, HLTELDVSHNRLTILGAEVVSA, ELRKLNLSHNQLPALPAQLGAL, HLEELDVSFNRLAHLPDSFSCL, HLRTLDVDHNQLTAFPQQLLQL, ALEELDVSSNRLRGLPEDISAL, ALKILWLSGAELGTLPRGFCELA, SLESLMLDNNGLQALPDEFSRL, RLKMLNLSSNLFEEFPAALLPLA, GLEELYLSRNQLTSVPSLIAGL, RLLTLWLDNNRIRYLPDSIVEL, and GLEELVLQGNQIAVLPDNFGQL. The tract at residues 60–360 is required for interaction with PJA2; it reads DIEVLNLGNN…AVLPDNFGQL (301 aa). The tract at residues 60 to 645 is required for interaction with PPP2R2A; sequence DIEVLNLGNN…DKLLSVAEHR (586 aa). In terms of domain architecture, Roc spans 399 to 645; that stretch reads QPAVQPRLKL…DKLLSVAEHR (247 aa). Lys597 is subject to N6-acetyllysine.

Interacts with RAF1. Interacts with HSPD1. Interacts with PPP2CA; retains PPP2CA into the cytoplasm and excludes it from the nucleus. Interacts with PPP2R2A; the interaction is direct. Interacts with PJA2. Ubiquitinated. Ubiquitination by PJA2 does not lead MFHAS1 to proteasomal degradation but positively regulates its function in polarization of macrophages.

It localises to the cytoplasm. In terms of biological role, probable GTP-binding protein. Functions in innate immunity and more specifically the inflammatory response as a regulator of the Toll-like receptor TLR2 and TLR4 signaling pathways. Negatively regulates the part of the TLR4 signaling pathway that leads to the activation of the transcription factor AP-1. By retaining the phosphatase complex PP2A into the cytoplasm, prevents the dephosphorylation of the AP-1 subunit JUN which is required for proper activation of the transcription factor. Both inhibits and activates the TLR2-dependent signaling pathway. Positively regulates the TLR2 signaling pathway to activate specifically the downstream p38 and JNK MAP kinases and promote the polarization of macrophages toward the pro-inflammatory M1 phenotype. It may also play a role in the regulation of inflammation induced by high glucose through the PKB/AKT signaling pathway. Also involved in erythrocyte differentiation through activation of the ERK1/ERK2 signaling pathway. The protein is Malignant fibrous histiocytoma-amplified sequence 1 homolog of Mus musculus (Mouse).